A 504-amino-acid polypeptide reads, in one-letter code: MEKIDFRNKINWHRRYRSPQGVKSEHEILRIFESDRGRIINSPAIRRLQQKTQVFPLERNAAVRTRLTHSLEVQQVGRYIAKEVLSRLKEQGLLEAYGLSELTGPFESIVEMSCLMHDIGNPPFGHFGEAAINDWFSQRLFPADAENLPVSQDRCTVQTLRLQEGEEALNALRGNVRRDLCHFEGNAQGIRLVHTLLRMNLTWAQVGGILKYSRPAWHHGPVPETHSYLMKKPGFYLSEDQYISRLRKELQLDTYSRFPLAWIMEAADDISYCVADLEDAVEKRIFSVEQLYQHLYDAWGEHAPGDLFNLVVQNAWDKSGTNQLHHSAEDQFFMYLRVNTLNRLAPYAAQRFIDNLPDVFNGSFNHALLEDDSPYSRLLELYKNVAVRHVFNHPDVEQLELQGYRVISGLLDIYSPLLALTLAQFRELVEKESVRSLPIESRLYHKLSSRHRLAYIEAVSHLHPQAADFPVWEYYYRCRLIQDYISGMTDLYAWDEYRKLMAVE.

Residues 66-273 (RLTHSLEVQQ…MEAADDISYC (208 aa)) form the HD domain.

This sequence belongs to the dGTPase family. Type 1 subfamily. As to quaternary structure, homotetramer. The cofactor is Mg(2+).

The catalysed reaction is dGTP + H2O = 2'-deoxyguanosine + triphosphate + H(+). DGTPase preferentially hydrolyzes dGTP over the other canonical NTPs. This chain is Deoxyguanosinetriphosphate triphosphohydrolase, found in Cronobacter sakazakii (strain ATCC BAA-894) (Enterobacter sakazakii).